A 149-amino-acid polypeptide reads, in one-letter code: Large ribosomal subunit protein bL9 (149 aa).

The protein belongs to the bacterial ribosomal protein bL9 family.

In terms of biological role, binds to the 23S rRNA. In Desulforamulus reducens (strain ATCC BAA-1160 / DSM 100696 / MI-1) (Desulfotomaculum reducens), this protein is Large ribosomal subunit protein bL9.